The sequence spans 124 residues: Large ribosomal subunit protein uL18 (124 aa).

Belongs to the universal ribosomal protein uL18 family. As to quaternary structure, part of the 50S ribosomal subunit; part of the 5S rRNA/L5/L18/L25 subcomplex. Contacts the 5S and 23S rRNAs.

In terms of biological role, this is one of the proteins that bind and probably mediate the attachment of the 5S RNA into the large ribosomal subunit, where it forms part of the central protuberance. The protein is Large ribosomal subunit protein uL18 of Aquifex pyrophilus.